The primary structure comprises 646 residues: Lamin-1 (646 aa).

The tract at residues 1-85 is head; it reads MAEKAGEAGV…GSRATSPTSF (85 aa). The disordered stretch occupies residues 1–94; the sequence is MAEKAGEAGV…FSRAQEKEEL (94 aa). Polar residues-rich tracts occupy residues 48-67 and 75-87; these read ATPSSQQSQKSVRTESSMSL and QGSRATSPTSFSR. The coil 1A stretch occupies residues 86–126; sequence SRAQEKEELQNLNDRLAKILNKLNDSEEENRTLKIRLTTVQ. Residues 90-446 form the IF rod domain; sequence EKEELQNLND…KLLSDEEIRL (357 aa). The linker 1 stretch occupies residues 127-137; the sequence is QETSADLNDQI. Residues 138–281 are coil 1B; it reads GKYRDELERA…SKLQRQSLSV (144 aa). Polar residues predominate over residues 281–301; that stretch reads VTTVDHHSAQSTSRRSGSDFS. Residues 281–304 are disordered; it reads VTTVDHHSAQSTSRRSGSDFSASV. Residues 282–299 are linker 2; it reads TTVDHHSAQSTSRRSGSD. The tract at residues 300–439 is coil 2; that stretch reads FSASVEDMRS…TELEMYNKLL (140 aa). Residues 440–646 are tail; it reads SDEEIRLGIT…GKGILGFFGL (207 aa). Positions 457–471 match the Nuclear localization signal motif; that stretch reads VRHGAKKRKLTETFY. Residues 476 to 487 show a composition bias toward low complexity; sequence GSRSSAGSRSAG. Residues 476-513 are disordered; sequence GSRSSAGSRSAGHNSTPVTKSQVTRTTVKTSENKSKAS. Polar residues predominate over residues 488-505; that stretch reads HNSTPVTKSQVTRTTVKT. One can recognise an LTD domain in the interval 504-618; it reads KTSENKSKAS…NQMATYEVSA (115 aa).

Belongs to the intermediate filament family.

The protein resides in the nucleus. Its function is as follows. Intermediate filament (IF) protein, component of the nuclear lamina, a fibrous layer on the nucleoplasmic side of the inner nuclear membrane, which is thought to provide a framework for the nuclear envelope. This chain is Lamin-1, found in Hypsibius exemplaris (Freshwater tardigrade).